Consider the following 188-residue polypeptide: Large ribosomal subunit protein bL35m (188 aa).

Belongs to the bacterial ribosomal protein bL35 family.

Its subcellular location is the mitochondrion. The polypeptide is Large ribosomal subunit protein bL35m (MRPL35) (Bos taurus (Bovine)).